A 394-amino-acid chain; its full sequence is Elongation factor Tu (394 aa).

Residues 10–204 (KPHVNVGTIG…ALDTYIPEPE (195 aa)) enclose the tr-type G domain. The G1 stretch occupies residues 19–26 (GHVDHGKT). Residue 19–26 (GHVDHGKT) coordinates GTP. Thr-26 contributes to the Mg(2+) binding site. A G2 region spans residues 60 to 64 (GITIN). Residues 81–84 (DCPG) form a G3 region. Residues 81–85 (DCPGH) and 136–139 (NKCD) each bind GTP. The segment at 136 to 139 (NKCD) is G4. The segment at 174–176 (SAL) is G5.

It belongs to the TRAFAC class translation factor GTPase superfamily. Classic translation factor GTPase family. EF-Tu/EF-1A subfamily. In terms of assembly, monomer.

Its subcellular location is the cytoplasm. The enzyme catalyses GTP + H2O = GDP + phosphate + H(+). Its function is as follows. GTP hydrolase that promotes the GTP-dependent binding of aminoacyl-tRNA to the A-site of ribosomes during protein biosynthesis. This chain is Elongation factor Tu, found in Shewanella denitrificans (strain OS217 / ATCC BAA-1090 / DSM 15013).